Reading from the N-terminus, the 441-residue chain is Transforming protein p54/c-ets-1 (441 aa).

One can recognise a PNT domain in the interval 51-136 (ATFSGFAKEQ…EHLEILQKEE (86 aa)). Residues 130–243 (EILQKEEAKP…DNMCMGRASR (114 aa)) form an activation domain; required for transcription activation region. The interval 304–312 (FKDYVRDRA) is helix HI-1. A helix HI-2 region spans residues 323 to 330 (AAALAGYT). Residues 335–415 (IQLWQFLLEL…AGKRYVYRFV (81 aa)) constitute a DNA-binding region (ETS). Residues 418–422 (LQSLL) are helix H4. The interval 426–432 (PEELHAM) is helix H5.

It belongs to the ETS family. As to quaternary structure, binds DNA as a homodimer; homodimerization is required for transcription activation.

It is found in the nucleus. It localises to the cytoplasm. Autoinhibited by a module composed of four alpha helices (HI-1, HI-2, H4, and H5) that flank the DNA-binding ETS domain, reducing the affinity for DNA. Functionally, transcription factor. Directly controls the expression of cytokine and chemokine genes in a wide variety of different cellular contexts. This is Transforming protein p54/c-ets-1 (ETS1) from Gallus gallus (Chicken).